Consider the following 456-residue polypeptide: Enolase (456 aa).

Q164 provides a ligand contact to (2R)-2-phosphoglycerate. Residue E207 is the Proton donor of the active site. The Mg(2+) site is built by D244, E287, and D314. (2R)-2-phosphoglycerate-binding residues include K339, R368, S369, and K390. K339 (proton acceptor) is an active-site residue.

This sequence belongs to the enolase family. In terms of assembly, component of the RNA degradosome, a multiprotein complex involved in RNA processing and mRNA degradation. It depends on Mg(2+) as a cofactor.

Its subcellular location is the cytoplasm. The protein resides in the secreted. It localises to the cell surface. It carries out the reaction (2R)-2-phosphoglycerate = phosphoenolpyruvate + H2O. It functions in the pathway carbohydrate degradation; glycolysis; pyruvate from D-glyceraldehyde 3-phosphate: step 4/5. In terms of biological role, catalyzes the reversible conversion of 2-phosphoglycerate (2-PG) into phosphoenolpyruvate (PEP). It is essential for the degradation of carbohydrates via glycolysis. This chain is Enolase, found in Francisella tularensis subsp. novicida (strain U112).